Here is a 1112-residue protein sequence, read N- to C-terminus: Cytosolic carboxypeptidase 4 (1112 aa).

The tract at residues 291–345 (TTEPPHDLPEEDFEDDGDDEVDKDSDTEDGKVEDDDLETDVNKLSSKPGLDRPEE) is disordered. The segment covering 299 to 329 (PEEDFEDDGDDEVDKDSDTEDGKVEDDDLET) has biased composition (acidic residues). Positions 732–1022 (YPYTYTALMT…HPVDGLQGLQ (291 aa)) constitute a Peptidase M14 domain. 3 residues coordinate Zn(2+): histidine 804, glutamate 807, and histidine 901. The active-site Proton donor/acceptor is the glutamate 986.

It belongs to the peptidase M14 family. Interacts with MYLK. Interacts with TCF4. Zn(2+) serves as cofactor. As to expression, expressed in corneal endothelium.

It is found in the cytoplasm. The protein resides in the cytosol. The catalysed reaction is (L-glutamyl)(n+1)-gamma-L-glutamyl-L-glutamyl-[protein] + H2O = (L-glutamyl)(n)-gamma-L-glutamyl-L-glutamyl-[protein] + L-glutamate. It carries out the reaction C-terminal L-alpha-aminoacyl-L-glutamyl-L-glutamyl-[tubulin] + H2O = C-terminal L-alpha-aminoacyl-L-glutamyl-[tubulin] + L-glutamate. In terms of biological role, metallocarboxypeptidase that mediates deglutamylation of tubulin and non-tubulin target proteins. Catalyzes the removal of polyglutamate side chains present on the gamma-carboxyl group of glutamate residues within the C-terminal tail of tubulin protein. Specifically cleaves tubulin long-side-chains, while it is not able to remove the branching point glutamate. Also catalyzes the removal of polyglutamate residues from the carboxy-terminus of non-tubulin proteins such as MYLK. This Homo sapiens (Human) protein is Cytosolic carboxypeptidase 4.